We begin with the raw amino-acid sequence, 745 residues long: 1,4-alpha-glucan branching enzyme GlgB (745 aa).

Aspartate 416 (nucleophile) is an active-site residue. Glutamate 469 functions as the Proton donor in the catalytic mechanism.

It belongs to the glycosyl hydrolase 13 family. GlgB subfamily. In terms of assembly, monomer.

The enzyme catalyses Transfers a segment of a (1-&gt;4)-alpha-D-glucan chain to a primary hydroxy group in a similar glucan chain.. It participates in glycan biosynthesis; glycogen biosynthesis. Functionally, catalyzes the formation of the alpha-1,6-glucosidic linkages in glycogen by scission of a 1,4-alpha-linked oligosaccharide from growing alpha-1,4-glucan chains and the subsequent attachment of the oligosaccharide to the alpha-1,6 position. In Shewanella sp. (strain MR-7), this protein is 1,4-alpha-glucan branching enzyme GlgB.